The chain runs to 163 residues: Large ribosomal subunit protein uL11 (163 aa).

The tract at residues 1 to 25 (MAGTIEVLVAGGQADPGPPLGPELG) is disordered.

It belongs to the universal ribosomal protein uL11 family. In terms of assembly, part of the ribosomal stalk of the 50S ribosomal subunit. Interacts with L10 and the large rRNA to form the base of the stalk. L10 forms an elongated spine to which L12 dimers bind in a sequential fashion forming a multimeric L10(L12)X complex.

Its function is as follows. Forms part of the ribosomal stalk which helps the ribosome interact with GTP-bound translation factors. This Natronomonas pharaonis (strain ATCC 35678 / DSM 2160 / CIP 103997 / JCM 8858 / NBRC 14720 / NCIMB 2260 / Gabara) (Halobacterium pharaonis) protein is Large ribosomal subunit protein uL11.